The sequence spans 347 residues: UDP-N-acetylenolpyruvoylglucosamine reductase (347 aa).

In terms of domain architecture, FAD-binding PCMH-type spans 27-197; it reads LPARAQRLAR…TGIELRLNKM (171 aa). Arg-173 is a catalytic residue. The active-site Proton donor is the Ser-247. The active site involves Glu-342.

The protein belongs to the MurB family. FAD serves as cofactor.

The protein localises to the cytoplasm. The enzyme catalyses UDP-N-acetyl-alpha-D-muramate + NADP(+) = UDP-N-acetyl-3-O-(1-carboxyvinyl)-alpha-D-glucosamine + NADPH + H(+). It functions in the pathway cell wall biogenesis; peptidoglycan biosynthesis. In terms of biological role, cell wall formation. This is UDP-N-acetylenolpyruvoylglucosamine reductase from Alcanivorax borkumensis (strain ATCC 700651 / DSM 11573 / NCIMB 13689 / SK2).